Here is a 122-residue protein sequence, read N- to C-terminus: Large ribosomal subunit protein uL14c (122 aa).

It belongs to the universal ribosomal protein uL14 family. In terms of assembly, part of the 50S ribosomal subunit.

The protein localises to the plastid. Its subcellular location is the chloroplast. Its function is as follows. Binds to 23S rRNA. In Stigeoclonium helveticum (Green alga), this protein is Large ribosomal subunit protein uL14c.